The primary structure comprises 601 residues: ATP-dependent RNA helicase DeaD (601 aa).

The Q motif signature appears at 6-34 (STFSFLGLNPFIIKSLSKMGYVKPSPIQA). The region spanning 37 to 208 (IPLLLEGRDV…KRFMKNPQEI (172 aa)) is the Helicase ATP-binding domain. Residue 50 to 57 (AQTGSGKT) participates in ATP binding. The short motif at 156–159 (DEAD) is the DEAD box element. The region spanning 231–378 (KTDALIRFLE…EVQLPKIEVL (148 aa)) is the Helicase C-terminal domain. The segment covering 564 to 581 (SIFNKDKNNKRRFSDNRL) has biased composition (basic and acidic residues). Residues 564-601 (SIFNKDKNNKRRFSDNRLNKSSSIKNETKSSFFRRKSV) are disordered. Over residues 582–594 (NKSSSIKNETKSS) the composition is skewed to polar residues.

Belongs to the DEAD box helicase family. DeaD/CsdA subfamily.

It localises to the cytoplasm. It carries out the reaction ATP + H2O = ADP + phosphate + H(+). DEAD-box RNA helicase involved in various cellular processes at low temperature, including ribosome biogenesis, mRNA degradation and translation initiation. The chain is ATP-dependent RNA helicase DeaD from Buchnera aphidicola subsp. Schizaphis graminum (strain Sg).